A 158-amino-acid polypeptide reads, in one-letter code: Cyclic pyranopterin monophosphate synthase (158 aa).

Residues 74-76 (MCH) and 112-113 (ME) each bind substrate. Aspartate 127 is a catalytic residue.

The protein belongs to the MoaC family. Homohexamer; trimer of dimers.

The enzyme catalyses (8S)-3',8-cyclo-7,8-dihydroguanosine 5'-triphosphate = cyclic pyranopterin phosphate + diphosphate. It participates in cofactor biosynthesis; molybdopterin biosynthesis. Catalyzes the conversion of (8S)-3',8-cyclo-7,8-dihydroguanosine 5'-triphosphate to cyclic pyranopterin monophosphate (cPMP). This Helicobacter pylori (strain G27) protein is Cyclic pyranopterin monophosphate synthase.